Here is a 396-residue protein sequence, read N- to C-terminus: Elongation factor Tu (396 aa).

The tr-type G domain occupies 10–206 (KPHVNVGTIG…ALDDYIPEPE (197 aa)). Residues 19–26 (GHVDHGKT) form a G1 region. Residue 19–26 (GHVDHGKT) participates in GTP binding. Threonine 26 contributes to the Mg(2+) binding site. Residues 60 to 64 (GITIA) are G2. Residues 81-84 (DCPG) are G3. GTP is bound by residues 81 to 85 (DCPGH) and 136 to 139 (NKAD). Residues 136–139 (NKAD) form a G4 region. Residues 174–176 (SAL) are G5.

The protein belongs to the TRAFAC class translation factor GTPase superfamily. Classic translation factor GTPase family. EF-Tu/EF-1A subfamily. Monomer.

Its subcellular location is the cytoplasm. It carries out the reaction GTP + H2O = GDP + phosphate + H(+). In terms of biological role, GTP hydrolase that promotes the GTP-dependent binding of aminoacyl-tRNA to the A-site of ribosomes during protein biosynthesis. This chain is Elongation factor Tu, found in Methylococcus capsulatus (strain ATCC 33009 / NCIMB 11132 / Bath).